The primary structure comprises 370 residues: Histidinol-phosphate aminotransferase 1 (370 aa).

N6-(pyridoxal phosphate)lysine is present on Lys222.

It belongs to the class-II pyridoxal-phosphate-dependent aminotransferase family. Histidinol-phosphate aminotransferase subfamily. As to quaternary structure, homodimer. The cofactor is pyridoxal 5'-phosphate.

The catalysed reaction is L-histidinol phosphate + 2-oxoglutarate = 3-(imidazol-4-yl)-2-oxopropyl phosphate + L-glutamate. It functions in the pathway amino-acid biosynthesis; L-histidine biosynthesis; L-histidine from 5-phospho-alpha-D-ribose 1-diphosphate: step 7/9. The protein is Histidinol-phosphate aminotransferase 1 (hisC1) of Bacillus anthracis.